A 389-amino-acid chain; its full sequence is tRNA-specific 2-thiouridylase MnmA (389 aa).

ATP is bound by residues 35–42 (GMSGGVDS) and Met61. The interval 121–123 (NPD) is interaction with target base in tRNA. Cys126 acts as the Nucleophile in catalysis. Cys126 and Cys223 form a disulfide bridge. Gly151 serves as a coordination point for ATP. An interaction with tRNA region spans residues 173–175 (KDQ). Cys223 acts as the Cysteine persulfide intermediate in catalysis. Residues 335–336 (RY) form an interaction with tRNA region.

Belongs to the MnmA/TRMU family.

Its subcellular location is the cytoplasm. It catalyses the reaction S-sulfanyl-L-cysteinyl-[protein] + uridine(34) in tRNA + AH2 + ATP = 2-thiouridine(34) in tRNA + L-cysteinyl-[protein] + A + AMP + diphosphate + H(+). Functionally, catalyzes the 2-thiolation of uridine at the wobble position (U34) of tRNA, leading to the formation of s(2)U34. This is tRNA-specific 2-thiouridylase MnmA from Actinobacillus pleuropneumoniae serotype 5b (strain L20).